The sequence spans 336 residues: uncharacterized protein (336 aa).

A signal peptide spans 1–33 (MGSAWPAEIRKIAKISKRLLGATVILGFGVAEA).

This is an uncharacterized protein from Sinorhizobium fredii (strain NBRC 101917 / NGR234).